The chain runs to 576 residues: High-affinity choline transporter 1 (576 aa).

Residues 6-26 form a helical membrane-spanning segment; it reads GIVAIVFFYVLILVVGIWAGR. Residues 27–51 lie on the Cytoplasmic side of the membrane; the sequence is KSKSSKELESEAGAATEEVMLAGRN. A helical transmembrane segment spans residues 52-72; sequence IGTLVGIFTMTATWVGGAYIN. Residues 73 to 82 are Extracellular-facing; it reads GTAEALYNGG. The chain crosses the membrane as a helical span at residues 83 to 103; sequence LLGCQAPVGYAISLVMGGLLF. Topologically, residues 104–126 are cytoplasmic; it reads AKKMREEGYITMLDPFQHKYGQR. The chain crosses the membrane as a helical span at residues 127–147; that stretch reads IGGLMYVPALLGETFWTAAIL. Over 148–165 the chain is Extracellular; that stretch reads SALGATLSVILGIDMNAS. A helical transmembrane segment spans residues 166 to 186; the sequence is VTLSACIAVFYTFTGGYYAVA. Topologically, residues 187–192 are cytoplasmic; sequence YTDVVQ. A helical transmembrane segment spans residues 193 to 213; the sequence is LFCIFVGLWVCVPAAMVHDGA. The Extracellular segment spans residues 214-233; sequence KDISRNAGDWIGEIGGFKET. A helical transmembrane segment spans residues 234–254; the sequence is SLWIDCMLLLVFGGIPWQVYF. Residues 255 to 270 lie on the Cytoplasmic side of the membrane; the sequence is QRVLSSKTAHGAQTLS. The helical transmembrane segment at 271 to 291 threads the bilayer; sequence FVAGVGCILMAIPPALIGAIA. The Extracellular segment spans residues 292–319; that stretch reads RNTDWRMTDYSPWNNGTKVESIPPDKRN. The N-linked (GlcNAc...) asparagine glycan is linked to Asn-306. Residues 320–340 form a helical membrane-spanning segment; sequence MVVPLVFQYLTPRWVAFIGLG. Residues 341–378 are Cytoplasmic-facing; sequence AVSAAVMSSADSSVLSAASMFAHNIWKLTIRPHASEKE. The chain crosses the membrane as a helical span at residues 379 to 399; the sequence is VIIVMRIAIICVGIMATIMAL. Topologically, residues 400-408 are extracellular; the sequence is TIQSIYGLW. A helical transmembrane segment spans residues 409–429; sequence YLCADLVYVILFPQLLCVVYM. Residues 430–437 lie on the Cytoplasmic side of the membrane; sequence PRSNTYGS. Residues 438–458 form a helical membrane-spanning segment; that stretch reads LAGYAVGLVLRLIGGEPLVSL. Over 459–478 the chain is Extracellular; sequence PAFFHYPMYTDGVQYFPFRT. A helical membrane pass occupies residues 479-499; the sequence is TAMLSSMATIYIVSIQSEKLF. Residues 500–576 lie on the Cytoplasmic side of the membrane; the sequence is KSGRLSPEWD…DQSYYSTNSN (77 aa). Residues 541-576 are disordered; it reads APNGTPAPVHPNQQPSDENTLLHPYSDQSYYSTNSN. The segment covering 566 to 576 has biased composition (polar residues); that stretch reads SDQSYYSTNSN.

The protein belongs to the sodium:solute symporter (SSF) (TC 2.A.21) family. Detected in the nervous system, including the nerve ring and cholinergic motor neurons of the ventral nerve cord.

Its subcellular location is the membrane. Functionally, imports choline from the extracellular space to the neuron with high affinity. Choline uptake is the rate-limiting step in acetylcholine synthesis. Sodium ion and chloride ion dependent. The sequence is that of High-affinity choline transporter 1 (cho-1) from Caenorhabditis elegans.